Here is a 520-residue protein sequence, read N- to C-terminus: AarF domain-containing protein kinase 1 (520 aa).

Residues Glu148–Phe455 enclose the Protein kinase domain. Residues Leu154–Val162 and Lys176 contribute to the ATP site. Residue Asp308 is the Proton acceptor of the active site.

It belongs to the protein kinase superfamily. ADCK protein kinase family.

The protein resides in the mitochondrion. Appears to be essential for maintaining mitochondrial cristae formation and mitochondrial function by acting via YME1L1 in a kinase-independent manner to regulate essential mitochondrial structural proteins OPA1 and IMMT. The action of this enzyme is not yet clear. It is not known if it has protein kinase activity and what type of substrate it would phosphorylate (Ser, Thr or Tyr). This chain is AarF domain-containing protein kinase 1 (adck1), found in Xenopus laevis (African clawed frog).